The sequence spans 895 residues: DNA double-strand break repair Rad50 ATPase (895 aa).

ATP is bound by residues N32–S38 and Q137. Positions S183 to K253 form a coiled coil. In terms of domain architecture, Zinc-hook spans R411–D507. Zn(2+)-binding residues include C455 and C458. 2 coiled-coil regions span residues T464–N510 and E618–E647.

Belongs to the SMC family. RAD50 subfamily. Homodimer. Forms a heterotetramer composed of two Mre11 subunits and two Rad50 subunits. The cofactor is Zn(2+).

Its function is as follows. Part of the Rad50/Mre11 complex, which is involved in the early steps of DNA double-strand break (DSB) repair. The complex may facilitate opening of the processed DNA ends to aid in the recruitment of HerA and NurA. Rad50 controls the balance between DNA end bridging and DNA resection via ATP-dependent structural rearrangements of the Rad50/Mre11 complex. The polypeptide is DNA double-strand break repair Rad50 ATPase (Thermoplasma volcanium (strain ATCC 51530 / DSM 4299 / JCM 9571 / NBRC 15438 / GSS1)).